The sequence spans 377 residues: Nitric oxide reductase FlRd-NAD(+) reductase (377 aa).

The protein belongs to the FAD-dependent oxidoreductase family. Requires FAD as cofactor.

It is found in the cytoplasm. It carries out the reaction 2 reduced [nitric oxide reductase rubredoxin domain] + NAD(+) + H(+) = 2 oxidized [nitric oxide reductase rubredoxin domain] + NADH. The protein operates within nitrogen metabolism; nitric oxide reduction. Its function is as follows. One of at least two accessory proteins for anaerobic nitric oxide (NO) reductase. Reduces the rubredoxin moiety of NO reductase. This chain is Nitric oxide reductase FlRd-NAD(+) reductase, found in Salmonella enteritidis PT4 (strain P125109).